A 118-amino-acid polypeptide reads, in one-letter code: C-X-C motif chemokine 17 (118 aa).

The signal sequence occupies residues 1-22 (MKVLISSLLLLLPLMLMSVVSS). Intrachain disulfides connect cysteine 74-cysteine 102 and cysteine 76-cysteine 109.

This sequence belongs to the intercrine alpha (chemokine CxC) family.

The protein resides in the secreted. Its function is as follows. Chemokine that acts as a chemoattractant for monocytes, macrophages and dendritic cells. Plays a role in angiogenesis and possibly in the development of tumors. Acts as an anti-inflammatory in the stomach. May play a role in the innate defense against infections. Activates the C-X-C chemokine receptor GPR35 to induce a rapid and transient rise in the level of intracellular calcium ions. The protein is C-X-C motif chemokine 17 (CXCL17) of Bos taurus (Bovine).